We begin with the raw amino-acid sequence, 88 residues long: Small ribosomal subunit protein uS15 (88 aa).

Residues 1–12 (MLTNTDRQQVIA) are compositionally biased toward polar residues. The segment at 1-23 (MLTNTDRQQVIAQYQRAPGDTGS) is disordered.

The protein belongs to the universal ribosomal protein uS15 family. Part of the 30S ribosomal subunit. Forms a bridge to the 50S subunit in the 70S ribosome, contacting the 23S rRNA.

Functionally, one of the primary rRNA binding proteins, it binds directly to 16S rRNA where it helps nucleate assembly of the platform of the 30S subunit by binding and bridging several RNA helices of the 16S rRNA. Forms an intersubunit bridge (bridge B4) with the 23S rRNA of the 50S subunit in the ribosome. The polypeptide is Small ribosomal subunit protein uS15 (Psychrobacter sp. (strain PRwf-1)).